Reading from the N-terminus, the 441-residue chain is MIIEHSAEVRGKTPLYRHLYVQVLAAIAAGILLGHFYPDIGTELKPLGDAFIRLVKMIIAPVIFLTVATGIAGMTDLAKVGRVAGKAMIYFLAFSTLALVVGLVVANVVQPGAGMHIDPASLDAKAVATYAEKAHEQSITGFLMNIIPTTLVGAFAEGDILQVLFISVLFGISLAIVGKKAEPVVDFLQALTLPIFRLVAILMKAAPIGAFGAMAFTIGKYGIASIANLAMLIGTFYLTSFLFVFIVLGAVARYNGFSILSLIRYIKEELLLVLGTSSSEAALPGLMNKMEKAGCKRSVVGLVIPTGYSFNLDGTNIYMTLAALFIAQATDTPLSYGDQILLLLVAMLSSKGAAGITGAGFITLAATLSVVPSVPVAGMALILGIDRFMSECRALTNFVGNAVATIVVAKWEGELDQAQLSAALGGEASVEAIPAVVQPAE.

The Cytoplasmic segment spans residues 1–30 (MIIEHSAEVRGKTPLYRHLYVQVLAAIAAG). Residues 31–49 (ILLGHFYPDIGTELKPLGD) form a helical membrane-spanning segment. The Periplasmic segment spans residues 50 to 68 (AFIRLVKMIIAPVIFLTVA). A helical membrane pass occupies residues 69–87 (TGIAGMTDLAKVGRVAGKA). The Cytoplasmic portion of the chain corresponds to 88-99 (MIYFLAFSTLAL). A helical transmembrane segment spans residues 100 to 118 (VVGLVVANVVQPGAGMHID). Residues 119–149 (PASLDAKAVATYAEKAHEQSITGFLMNIIPT) are Periplasmic-facing. The helical transmembrane segment at 150-168 (TLVGAFAEGDILQVLFISV) threads the bilayer. Residues 169-171 (LFG) lie on the Cytoplasmic side of the membrane. Residues 172–190 (ISLAIVGKKAEPVVDFLQA) form a helical membrane-spanning segment. The Periplasmic portion of the chain corresponds to 191 to 209 (LTLPIFRLVAILMKAAPIG). Residues 210-228 (AFGAMAFTIGKYGIASIAN) traverse the membrane as a helical segment. Over 229-241 (LAMLIGTFYLTSF) the chain is Cytoplasmic. A helical transmembrane segment spans residues 242–260 (LFVFIVLGAVARYNGFSIL). The Periplasmic segment spans residues 261-281 (SLIRYIKEELLLVLGTSSSEA). The chain crosses the membrane as a helical span at residues 282 to 300 (ALPGLMNKMEKAGCKRSVV). The Cytoplasmic segment spans residues 301–320 (GLVIPTGYSFNLDGTNIYMT). Residues 321–339 (LAALFIAQATDTPLSYGDQ) form a helical membrane-spanning segment. Residues 340-350 (ILLLLVAMLSS) are Periplasmic-facing. A helical transmembrane segment spans residues 351–369 (KGAAGITGAGFITLAATLS). Over 370–378 (VVPSVPVAG) the chain is Cytoplasmic. The helical transmembrane segment at 379-398 (MALILGIDRFMSECRALTNF) threads the bilayer. The Periplasmic portion of the chain corresponds to 399–405 (VGNAVAT). The chain crosses the membrane as a helical span at residues 406-424 (IVVAKWEGELDQAQLSAAL). Residues 425–441 (GGEASVEAIPAVVQPAE) are Cytoplasmic-facing.

Belongs to the dicarboxylate/amino acid:cation symporter (DAACS) (TC 2.A.23) family.

The protein localises to the cell inner membrane. In terms of biological role, responsible for the transport of dicarboxylates such as succinate, fumarate, and malate from the periplasm across the inner membrane. This transport system plays an important role in the energy supply of rhizobium-legume symbionts. The sequence is that of C4-dicarboxylate transport protein (dctA) from Rhizobium meliloti (strain 1021) (Ensifer meliloti).